Reading from the N-terminus, the 785-residue chain is Hyperosmolality-gated Ca2+ permeable channel 1.7 (785 aa).

A helical membrane pass occupies residues 7–27 (IGLSAAINLLSAFAFLFAFAM). Phosphoserine is present on Ser-54. Helical transmembrane passes span 101 to 121 (IYLL…GVLV), 156 to 176 (FWAH…ILYM), 373 to 393 (LLTT…IAFV), 425 to 445 (FLPG…LMTM), 465 to 485 (YFWF…TAFQ), 510 to 530 (ATFF…AEIL), 582 to 602 (AVAP…YVVF), 628 to 648 (LIIC…TKKF), and 651 to 671 (VTAL…YCAG). Positions 725-761 (VDEEESNPLVRTKRTSQGTTRYNSEASSSATTTPVAN) are disordered. Residues 739–761 (TSQGTTRYNSEASSSATTTPVAN) show a composition bias toward polar residues.

It belongs to the CSC1 (TC 1.A.17) family. Post-translationally, phosphorylated and activated by BIK1.

It is found in the membrane. It catalyses the reaction Ca(2+)(in) = Ca(2+)(out). Calcium-permeable channel involved in plant stomatal immunity. This is Hyperosmolality-gated Ca2+ permeable channel 1.7 from Arabidopsis thaliana (Mouse-ear cress).